The chain runs to 297 residues: Ribosomal RNA small subunit methyltransferase H (297 aa).

Residues 36 to 38 (GGH), aspartate 56, leucine 90, aspartate 104, and histidine 111 each bind S-adenosyl-L-methionine.

The protein belongs to the methyltransferase superfamily. RsmH family.

It localises to the cytoplasm. It carries out the reaction cytidine(1402) in 16S rRNA + S-adenosyl-L-methionine = N(4)-methylcytidine(1402) in 16S rRNA + S-adenosyl-L-homocysteine + H(+). In terms of biological role, specifically methylates the N4 position of cytidine in position 1402 (C1402) of 16S rRNA. The protein is Ribosomal RNA small subunit methyltransferase H of Dictyoglomus thermophilum (strain ATCC 35947 / DSM 3960 / H-6-12).